Here is a 245-residue protein sequence, read N- to C-terminus: DNA polymerase sliding clamp 1 (245 aa).

The protein belongs to the PCNA family. Homotrimer. The subunits circularize to form a toroid; DNA passes through its center. Replication factor C (RFC) is required to load the toroid on the DNA.

In terms of biological role, sliding clamp subunit that acts as a moving platform for DNA processing. Responsible for tethering the catalytic subunit of DNA polymerase and other proteins to DNA during high-speed replication. The polypeptide is DNA polymerase sliding clamp 1 (Sulfurisphaera ohwakuensis).